A 706-amino-acid polypeptide reads, in one-letter code: MPDPATYRPAPGSIPVEPGVYRFRDPHGRVIYVGKAKSLRSRLTSYFADITSLAPRTRQMVMTAGSVEWTVVTTEVEALQLEYNWIKEFDPRFNVRYRDDKSYPVLAVTLNEEYPRLMVYRGPRRKGVRYFGPYSHAWAIRETLDLLTRVFPARTCSAGVFKRHKQIDRPCLLGYIDKCSAPCVGRVSAEQHRQIVLDFCDFLGGKTDRLAKDMEQQMTAAAEQLDFERAARLRDDISALKRALEKQAVVFGDGTDADVVAFADDDLEAAVQVFHVRGGRVRGQRGWIVEKSSEPAATGDADLGQSGQEQLVEQFLTQFYGEQAELGSASDTGGDEATNPVPRQVLVPVLPPNADELATWLSGLRGSRVSLRVPVRGDKRALAETVQRNAQEALAQHKLKRAGDFNARSEALQSIQEALGLADAPLRIECVDISHVQGTDVVASLVVFEDGLPRKSDYRHYAIREAAGDGRSDDVASIAEVTRRRFLRHTSDSQPDPSAEQRPRRFAYPPNLFVVDGGAPQVNAAAAVLEDLGVDDVAVIGLAKRLEEVWVPSEPDPVILPRNSEGLYLLQRVRDEAHRFAISYHRSKRSKRMTASALDSVRGLGEHRRKALVAHFGSVARLKEATVDEITAVPGIGVATARAVQEALGVAPQNGTAPDPAPGTGDPQTPADPHSAATAADIEDDRHATGATGPQMNGSEQQVDRV.

The region spanning 16–95 (VEPGVYRFRD…IKEFDPRFNV (80 aa)) is the GIY-YIG domain. Residues 208-243 (DRLAKDMEQQMTAAAEQLDFERAARLRDDISALKRA) enclose the UVR domain. Positions 651 to 706 (APQNGTAPDPAPGTGDPQTPADPHSAATAADIEDDRHATGATGPQMNGSEQQVDRV) are disordered. The segment covering 692-706 (TGPQMNGSEQQVDRV) has biased composition (polar residues).

It belongs to the UvrC family. In terms of assembly, interacts with UvrB in an incision complex.

Its subcellular location is the cytoplasm. The UvrABC repair system catalyzes the recognition and processing of DNA lesions. UvrC both incises the 5' and 3' sides of the lesion. The N-terminal half is responsible for the 3' incision and the C-terminal half is responsible for the 5' incision. This is UvrABC system protein C from Mycolicibacterium smegmatis (strain ATCC 700084 / mc(2)155) (Mycobacterium smegmatis).